Here is a 470-residue protein sequence, read N- to C-terminus: MNTISIVKILNEFDQLQNTEITLYGWIRTRRHSKTKITFLNLYDGSCLESLQIVVKNNLHNYETDILKLTTGCSIIAKGYITNSLGTKQRIELIATYIQVLGWIDNPSTYPITTKKHSMEYLRNVAHLRPRTHIFGAISRIRHVLFQSIHNLMNTKGFIWVPTPIITASDTEGNSKMFYVSELLNNSKKSQNICNSHQKIPELFFGKEAFLTVSGQLNVESYACALTKVYTFGPTFRAEHSNTNRHLAEFWMLEPEMAFTDLNIIIKIADSLLKDIVQTILEQCINDIEYCASHIKEYNLIKRLENFLHSKIIHIEYTDAIKLLSSCDKTFNNTIYWGMDLFSEHEKYLSEEYFQSPIVIKNHPKNIKAFYMRLNDDNKTVSSMDILVPGIGEIIGGSQREERLSILDKRLLENNLKTECYWWYRDLRRYGTVPHSGFGLGFERLIIYITGLTNIRDAVPFPRTINSINF.

The protein belongs to the class-II aminoacyl-tRNA synthetase family. As to quaternary structure, homodimer.

Its subcellular location is the cytoplasm. The enzyme catalyses tRNA(Asn) + L-asparagine + ATP = L-asparaginyl-tRNA(Asn) + AMP + diphosphate + H(+). The sequence is that of Asparagine--tRNA ligase from Blochmanniella floridana.